We begin with the raw amino-acid sequence, 474 residues long: UDP-N-acetylmuramoyl-L-alanyl-D-glutamate--2,6-diaminopimelate ligase (474 aa).

S21 contacts UDP-N-acetyl-alpha-D-muramoyl-L-alanyl-D-glutamate. Position 93-99 (93-99 (GTNGKSS)) interacts with ATP. Residues 139–140 (TT), S166, Q172, and R174 contribute to the UDP-N-acetyl-alpha-D-muramoyl-L-alanyl-D-glutamate site. Position 206 is an N6-carboxylysine (K206). Residues R367, 391 to 394 (DNPR), G441, and E445 contribute to the meso-2,6-diaminopimelate site. The Meso-diaminopimelate recognition motif motif lies at 391–394 (DNPR).

This sequence belongs to the MurCDEF family. MurE subfamily. Mg(2+) is required as a cofactor. In terms of processing, carboxylation is probably crucial for Mg(2+) binding and, consequently, for the gamma-phosphate positioning of ATP.

The protein localises to the cytoplasm. It catalyses the reaction UDP-N-acetyl-alpha-D-muramoyl-L-alanyl-D-glutamate + meso-2,6-diaminopimelate + ATP = UDP-N-acetyl-alpha-D-muramoyl-L-alanyl-gamma-D-glutamyl-meso-2,6-diaminopimelate + ADP + phosphate + H(+). Its pathway is cell wall biogenesis; peptidoglycan biosynthesis. Its function is as follows. Catalyzes the addition of meso-diaminopimelic acid to the nucleotide precursor UDP-N-acetylmuramoyl-L-alanyl-D-glutamate (UMAG) in the biosynthesis of bacterial cell-wall peptidoglycan. This is UDP-N-acetylmuramoyl-L-alanyl-D-glutamate--2,6-diaminopimelate ligase from Rickettsia bellii (strain RML369-C).